Consider the following 213-residue polypeptide: Adenylate kinase (213 aa).

Position 10-15 (10-15) interacts with ATP; that stretch reads GAGKGT. Residues 30 to 59 are NMP; sequence STGDMLRAAVAAGSEVGLRAKAAMESGSLV. Residues Thr31, Arg36, 57-59, 85-88, and Gln92 each bind AMP; these read SLV and GFPR. The tract at residues 126–163 is LID; it reads GRSSCEKCGEGYHDSFKPSAQPNVCDKCSGTLKRRADD. Arg127 provides a ligand contact to ATP. Positions 130, 133, 150, and 153 each coordinate Zn(2+). Residues Arg160 and Arg171 each contribute to the AMP site. An ATP-binding site is contributed by Gln199.

Belongs to the adenylate kinase family. Monomer.

The protein localises to the cytoplasm. The enzyme catalyses AMP + ATP = 2 ADP. It functions in the pathway purine metabolism; AMP biosynthesis via salvage pathway; AMP from ADP: step 1/1. Functionally, catalyzes the reversible transfer of the terminal phosphate group between ATP and AMP. Plays an important role in cellular energy homeostasis and in adenine nucleotide metabolism. The polypeptide is Adenylate kinase (Magnetococcus marinus (strain ATCC BAA-1437 / JCM 17883 / MC-1)).